Reading from the N-terminus, the 118-residue chain is Large ribosomal subunit protein bL19 (118 aa).

It belongs to the bacterial ribosomal protein bL19 family.

In terms of biological role, this protein is located at the 30S-50S ribosomal subunit interface and may play a role in the structure and function of the aminoacyl-tRNA binding site. In Frankia casuarinae (strain DSM 45818 / CECT 9043 / HFP020203 / CcI3), this protein is Large ribosomal subunit protein bL19.